Consider the following 252-residue polypeptide: Imidazole glycerol phosphate synthase subunit HisF (252 aa).

Residues aspartate 11 and aspartate 130 contribute to the active site.

It belongs to the HisA/HisF family. Heterodimer of HisH and HisF.

It localises to the cytoplasm. The catalysed reaction is 5-[(5-phospho-1-deoxy-D-ribulos-1-ylimino)methylamino]-1-(5-phospho-beta-D-ribosyl)imidazole-4-carboxamide + L-glutamine = D-erythro-1-(imidazol-4-yl)glycerol 3-phosphate + 5-amino-1-(5-phospho-beta-D-ribosyl)imidazole-4-carboxamide + L-glutamate + H(+). Its pathway is amino-acid biosynthesis; L-histidine biosynthesis; L-histidine from 5-phospho-alpha-D-ribose 1-diphosphate: step 5/9. IGPS catalyzes the conversion of PRFAR and glutamine to IGP, AICAR and glutamate. The HisF subunit catalyzes the cyclization activity that produces IGP and AICAR from PRFAR using the ammonia provided by the HisH subunit. The sequence is that of Imidazole glycerol phosphate synthase subunit HisF from Geobacillus kaustophilus (strain HTA426).